Reading from the N-terminus, the 513-residue chain is Light-independent protochlorophyllide reductase subunit B (513 aa).

[4Fe-4S] cluster is bound at residue D36. D299 (proton donor) is an active-site residue. 434-435 (GM) contributes to the substrate binding site.

This sequence belongs to the ChlB/BchB/BchZ family. In terms of assembly, protochlorophyllide reductase is composed of three subunits; ChlL, ChlN and ChlB. Forms a heterotetramer of two ChlB and two ChlN subunits. Requires [4Fe-4S] cluster as cofactor.

Its subcellular location is the plastid. The protein localises to the chloroplast. The catalysed reaction is chlorophyllide a + oxidized 2[4Fe-4S]-[ferredoxin] + 2 ADP + 2 phosphate = protochlorophyllide a + reduced 2[4Fe-4S]-[ferredoxin] + 2 ATP + 2 H2O. It participates in porphyrin-containing compound metabolism; chlorophyll biosynthesis (light-independent). Its function is as follows. Component of the dark-operative protochlorophyllide reductase (DPOR) that uses Mg-ATP and reduced ferredoxin to reduce ring D of protochlorophyllide (Pchlide) to form chlorophyllide a (Chlide). This reaction is light-independent. The NB-protein (ChlN-ChlB) is the catalytic component of the complex. In Staurastrum punctulatum (Green alga), this protein is Light-independent protochlorophyllide reductase subunit B.